Consider the following 211-residue polypeptide: Outer-membrane lipoprotein carrier protein (211 aa).

A signal peptide spans 1-24; it reads MNTIKILIGLLGIFLFSLSGIVSA.

The protein belongs to the LolA family. In terms of assembly, monomer.

It localises to the periplasm. Functionally, participates in the translocation of lipoproteins from the inner membrane to the outer membrane. Only forms a complex with a lipoprotein if the residue after the N-terminal Cys is not an aspartate (The Asp acts as a targeting signal to indicate that the lipoprotein should stay in the inner membrane). The polypeptide is Outer-membrane lipoprotein carrier protein (Coxiella burnetii (strain CbuK_Q154) (Coxiella burnetii (strain Q154))).